Reading from the N-terminus, the 107-residue chain is Ig kappa chain V-VI region SAPC 10 (107 aa).

The interval 1–23 is framework-1; that stretch reads EIVLTQSPAITAASLGQKVTITC. Cys-23 and Cys-87 are oxidised to a cystine. Positions 24–33 are complementarity-determining-1; that stretch reads SASSSVSYMH. The framework-2 stretch occupies residues 34–48; that stretch reads WYQQKSGTSPKPWIY. The segment at 49 to 55 is complementarity-determining-2; sequence EISKLAS. Positions 56–87 are framework-3; the sequence is GVPARFSGSGSGTSYSLTISSMEAEDAAIYYC. A complementarity-determining-3 region spans residues 88 to 96; sequence QQWNYPLIT. The tract at residues 97 to 106 is framework-4; the sequence is FGGGTKLEIK.

In Mus musculus (Mouse), this protein is Ig kappa chain V-VI region SAPC 10.